Consider the following 894-residue polypeptide: Protein SEY1 homolog (894 aa).

Composition is skewed to low complexity over residues 1 to 10 (MSEEITTNQT) and 36 to 48 (VQEQQEQQQQEQQ). Positions 1 to 97 (MSEEITTNQT…QKQQTQEQEH (97 aa)) are disordered. At 1–800 (MSEEITTNQT…EQNRLTSGGG (800 aa)) the chain is on the cytoplasmic side. Residues 21-60 (RLSNENIKQEDEEQQVQEQQEQQQQEQQEQIDDQDTQQQE) are a coiled coil. The segment covering 49 to 65 (EQIDDQDTQQQEDEFVV) has biased composition (acidic residues). The span at 78–93 (TPTLQETPQQQKQQTQ) shows a compositional bias: low complexity. The GB1/RHD3-type G domain maps to 138-361 (GFDYSVISIL…ADSFIPKRKY (224 aa)). 148–155 (GPQSSGKS) provides a ligand contact to GTP. Residues 801-821 (VPGYMIILLCVLGFNEFISII) form a helical membrane-spanning segment. The Lumenal portion of the chain corresponds to 822–824 (SSP). A helical transmembrane segment spans residues 825–845 (LLLLLTILLGGVGFVLFKLGL). Topologically, residues 846-894 (AGPFIDYSSQILVHFISKVKDIVLHVEQLQEQNHNNNNNNNNTPKQKRE) are cytoplasmic.

This sequence belongs to the TRAFAC class dynamin-like GTPase superfamily. GB1/RHD3 GTPase family. RHD3 subfamily.

The protein localises to the endoplasmic reticulum membrane. Functionally, probable GTP-binding protein that may be involved in cell development. In Dictyostelium discoideum (Social amoeba), this protein is Protein SEY1 homolog.